The sequence spans 317 residues: MLYQLLHTVLSVTGVTLNAFMMYLALTKSPKIMRPCSAIITIKTFTDILTSAMSFFVMQRIVTDGSSILVIPTGPCTRLGPTACYVGHMFMLCFLECNLIWMISSYIFRYYILYVRDPSIKSLVFVALCLSIPSFIHMAAWIRSYDPNEAFVVPDSFGLASSHLILGGHIVYRSTITLILQLFITSVLVLIAYAWIRNTLLSFAIKMGSDKNDVKNLNARLVKVINFQVFLPTFIFLGFFIFAAMFGRYITVNIAQYLVSIAFMFSPICSPFSYILFVPHYLNVITGNKKPAENRATDMCAVRAFKNPNVSVTMTNA.

Helical transmembrane passes span 5–25 (LLHT…MYLA), 38–58 (AIIT…FFVM), 83–103 (ACYV…IWMI), 122–142 (SLVF…AAWI), 176–196 (ITLI…YAWI), 227–247 (FQVF…AMFG), and 258–278 (LVSI…ILFV).

It belongs to the nematode receptor-like protein srd family.

The protein resides in the membrane. This Caenorhabditis elegans protein is Serpentine receptor class delta-26 (srd-26).